A 276-amino-acid chain; its full sequence is Bis(5'-nucleosyl)-tetraphosphatase, symmetrical (276 aa).

Belongs to the Ap4A hydrolase family.

The enzyme catalyses P(1),P(4)-bis(5'-adenosyl) tetraphosphate + H2O = 2 ADP + 2 H(+). In terms of biological role, hydrolyzes diadenosine 5',5'''-P1,P4-tetraphosphate to yield ADP. The chain is Bis(5'-nucleosyl)-tetraphosphatase, symmetrical from Neisseria gonorrhoeae (strain ATCC 700825 / FA 1090).